A 601-amino-acid chain; its full sequence is Aspartate--tRNA(Asp/Asn) ligase (601 aa).

E174 lines the L-aspartate pocket. The aspartate stretch occupies residues 198–201 (QLFK). R220 contacts L-aspartate. ATP contacts are provided by residues 220-222 (RDE) and Q229. Position 459 (H459) interacts with L-aspartate. E493 contributes to the ATP binding site. R500 contributes to the L-aspartate binding site. Residue 545-548 (GLDR) participates in ATP binding.

The protein belongs to the class-II aminoacyl-tRNA synthetase family. Type 1 subfamily. As to quaternary structure, homodimer.

Its subcellular location is the cytoplasm. It catalyses the reaction tRNA(Asx) + L-aspartate + ATP = L-aspartyl-tRNA(Asx) + AMP + diphosphate. Aspartyl-tRNA synthetase with relaxed tRNA specificity since it is able to aspartylate not only its cognate tRNA(Asp) but also tRNA(Asn). Reaction proceeds in two steps: L-aspartate is first activated by ATP to form Asp-AMP and then transferred to the acceptor end of tRNA(Asp/Asn). The polypeptide is Aspartate--tRNA(Asp/Asn) ligase (Variovorax paradoxus (strain S110)).